The chain runs to 494 residues: uncharacterized protein (494 aa).

2 VOC domains span residues 18–174 and 229–408; these read FIDC…FINR and SLDH…FGIL. Fe cation-binding residues include His232, His349, and Glu460.

This sequence belongs to the 4HPPD family. Requires Fe cation as cofactor.

Its function is as follows. May have dioxygenase activity. This is an uncharacterized protein from Dictyostelium discoideum (Social amoeba).